A 374-amino-acid chain; its full sequence is Large ribosomal subunit protein bL27m (374 aa).

A mitochondrion-targeting transit peptide spans 1 to 41 (MLRLSGVKSAVRARAAAGAAFSVSLSGPQAVSLLALPLVRH).

This sequence belongs to the bacterial ribosomal protein bL27 family.

It is found in the mitochondrion. Its function is as follows. Component of the large subunit of mitochondrial ribosome. This is Large ribosomal subunit protein bL27m (MRPL2) from Yarrowia lipolytica (strain CLIB 122 / E 150) (Yeast).